The primary structure comprises 305 residues: Popeye domain-containing protein 3 (305 aa).

An N-linked (GlcNAc...) asparagine glycan is attached at Asn4. 3 consecutive transmembrane segments (helical) span residues 34–54 (SILF…LYVF), 55–75 (SLLG…VCAA), and 77–99 (IFSW…TYQV). Positions 273–305 (PETPPVPPPRRLQRRSSGRPRPGVPNCSSPRKQ) are disordered. Asn298 carries N-linked (GlcNAc...) asparagine glycosylation.

Belongs to the popeye family. Expressed first preferentially in atrium and later also in the subepicardial compact layer of the ventricles.

It localises to the membrane. In terms of biological role, may play a role in the maintenance of heart function mediated, at least in part, through cAMP-binding. May play a role in the regulation of KCNK2-mediated current amplitude. The chain is Popeye domain-containing protein 3 (POPDC3) from Gallus gallus (Chicken).